The sequence spans 426 residues: tRNA(Met) cytidine acetate ligase (426 aa).

Residues 7–20 (VVEY…HLFH), G101, N168, and R193 contribute to the ATP site.

The protein belongs to the TmcAL family.

It is found in the cytoplasm. It catalyses the reaction cytidine(34) in elongator tRNA(Met) + acetate + ATP = N(4)-acetylcytidine(34) in elongator tRNA(Met) + AMP + diphosphate. In terms of biological role, catalyzes the formation of N(4)-acetylcytidine (ac(4)C) at the wobble position of elongator tRNA(Met), using acetate and ATP as substrates. First activates an acetate ion to form acetyladenylate (Ac-AMP) and then transfers the acetyl group to tRNA to form ac(4)C34. This chain is tRNA(Met) cytidine acetate ligase, found in Kosmotoga olearia (strain ATCC BAA-1733 / DSM 21960 / TBF 19.5.1).